The chain runs to 406 residues: Protease ElaD (406 aa).

H234 is an active-site residue. C316 acts as the Nucleophile in catalysis.

Belongs to the peptidase C79 family.

Its function is as follows. Protease that can act as an efficient and specific deubiquitinating enzyme in vitro. Does not possess desumoylating and deneddylating activities. The physiological substrate is unknown. This is Protease ElaD (elaD) from Escherichia coli O139:H28 (strain E24377A / ETEC).